The primary structure comprises 112 residues: Cell cycle protein GpsB (112 aa).

Positions 42–77 (YQKMADMNNEVVKLSEENHKLKKELEELRLRVATSR) form a coiled coil. Residues 74–96 (ATSRPQDNKNFSSNNSSSASNNV) are disordered. Low complexity predominate over residues 81–95 (NKNFSSNNSSSASNN).

It belongs to the GpsB family. In terms of assembly, forms polymers through the coiled coil domains. Interacts with PBP1, MreC and EzrA.

It localises to the cytoplasm. In terms of biological role, divisome component that associates with the complex late in its assembly, after the Z-ring is formed, and is dependent on DivIC and PBP2B for its recruitment to the divisome. Together with EzrA, is a key component of the system that regulates PBP1 localization during cell cycle progression. Its main role could be the removal of PBP1 from the cell pole after pole maturation is completed. Also contributes to the recruitment of PBP1 to the division complex. Not essential for septum formation. The polypeptide is Cell cycle protein GpsB (Staphylococcus epidermidis (strain ATCC 12228 / FDA PCI 1200)).